The sequence spans 130 residues: Large ribosomal subunit protein bL19 (130 aa).

It belongs to the bacterial ribosomal protein bL19 family.

Its function is as follows. This protein is located at the 30S-50S ribosomal subunit interface and may play a role in the structure and function of the aminoacyl-tRNA binding site. In Cupriavidus taiwanensis (strain DSM 17343 / BCRC 17206 / CCUG 44338 / CIP 107171 / LMG 19424 / R1) (Ralstonia taiwanensis (strain LMG 19424)), this protein is Large ribosomal subunit protein bL19.